We begin with the raw amino-acid sequence, 376 residues long: Queuine tRNA-ribosyltransferase (376 aa).

Catalysis depends on aspartate 90, which acts as the Proton acceptor. Substrate contacts are provided by residues 90–94 (DSGGF), aspartate 144, glutamine 193, and glycine 220. Residues 251 to 257 (GVGTPED) form an RNA binding region. Residue aspartate 270 is the Nucleophile of the active site. Positions 275-279 (TRNAR) are RNA binding; important for wobble base 34 recognition. Positions 308, 310, 313, and 339 each coordinate Zn(2+).

The protein belongs to the queuine tRNA-ribosyltransferase family. In terms of assembly, homodimer. Within each dimer, one monomer is responsible for RNA recognition and catalysis, while the other monomer binds to the replacement base PreQ1. Zn(2+) is required as a cofactor.

The catalysed reaction is 7-aminomethyl-7-carbaguanine + guanosine(34) in tRNA = 7-aminomethyl-7-carbaguanosine(34) in tRNA + guanine. It functions in the pathway tRNA modification; tRNA-queuosine biosynthesis. Its function is as follows. Catalyzes the base-exchange of a guanine (G) residue with the queuine precursor 7-aminomethyl-7-deazaguanine (PreQ1) at position 34 (anticodon wobble position) in tRNAs with GU(N) anticodons (tRNA-Asp, -Asn, -His and -Tyr). Catalysis occurs through a double-displacement mechanism. The nucleophile active site attacks the C1' of nucleotide 34 to detach the guanine base from the RNA, forming a covalent enzyme-RNA intermediate. The proton acceptor active site deprotonates the incoming PreQ1, allowing a nucleophilic attack on the C1' of the ribose to form the product. After dissociation, two additional enzymatic reactions on the tRNA convert PreQ1 to queuine (Q), resulting in the hypermodified nucleoside queuosine (7-(((4,5-cis-dihydroxy-2-cyclopenten-1-yl)amino)methyl)-7-deazaguanosine). This is Queuine tRNA-ribosyltransferase from Cupriavidus metallidurans (strain ATCC 43123 / DSM 2839 / NBRC 102507 / CH34) (Ralstonia metallidurans).